The following is a 47-amino-acid chain: uncharacterized protein (47 aa).

Disordered stretches follow at residues Met1–Gln20 and Glu25–Gly47. A compositionally biased stretch (basic and acidic residues) spans Glu25–Gln40.

This is an uncharacterized protein from Dictyostelium discoideum (Social amoeba).